The sequence spans 347 residues: Syntaxin-32 (347 aa).

Topologically, residues 1–325 (MSARHGQSSY…RYLNSISSNR (325 aa)) are cytoplasmic. Disordered regions lie at residues 172–191 (HESRRQLFSSNASKESTNPF) and 208–251 (PLPW…QQMV). Composition is skewed to polar residues over residues 177–191 (QLFSSNASKESTNPF) and 213–222 (NGSSSSSSQL). Residues 237 to 249 (QQSQQQQQQQQQQ) show a composition bias toward low complexity. In terms of domain architecture, t-SNARE coiled-coil homology spans 255-317 (DTYMQGRAEA…EGAQSQLARY (63 aa)). The helical; Anchor for type IV membrane protein transmembrane segment at 326-346 (WLMMKIFFVLIAFLMIFLFFV) threads the bilayer. A topological domain (vesicular) is located at residue Ala347.

It belongs to the syntaxin family. In terms of assembly, part of the t-SNARE complex.

The protein resides in the golgi apparatus. It is found in the cis-Golgi network membrane. Functionally, vesicle trafficking protein that functions in the secretory pathway. In Arabidopsis thaliana (Mouse-ear cress), this protein is Syntaxin-32 (SYP32).